Consider the following 639-residue polypeptide: MIKVALKDGSIKEFENAISVMDVAKSISEGLARNVVAASVNGEVVGLDHIIDTDCDLNLFKFEDKEGKEVFRHTSAHILAQAIKRLYPEAKLAIGPSIENGFYYDIDLDHRLVPEDLEKIEAEMKKIAKEDLKIERFELPRNEALELMKEQGEDYKVELISDLPESEIISFYKQGDFTDLCRGPHLPSTKKVKAVKLQSVAGAYWRGDENNKMLQRIYGTSFEKNKDLEEYLHLLEEAKKRDHRKLGKELGLFMIPEEGPGFPMFLPKGMELKNELLKFWREIHRKAGYIEIESPIILNRKLWETSGHWYHYKENMYTVKIDDEDYAIKPMNCPGGLIYYNSQLHSYRDFPMRVAELGRVHRHELSGALQGLMRVRAFTQDDSHIFMLPEQIKDEIKGVANLIDGIYKTFGFEYNLELSTRPENSMGSDEEWEAAENGLREALEELGLPYTINEGDGAFYGPKIDFHLKDCLGRTWQCGTIQLDMQLPRQFDNTYIGQDGEKHRPVMIHRVAFGSIERFIGILIEHYAGKFPVWLSPTQVKILPISDKFMDYANEVKKELFDKGIRVELDDRAEKIGFKIREAQLEKVPYMLIVGEKEVADNNVSVRSRDKGEIGSIKLDEFIASISKEIESRESIIQD.

The TGS domain maps to 1–61 (MIKVALKDGS…DTDCDLNLFK (61 aa)). Positions 242 to 532 (DHRKLGKELG…LIEHYAGKFP (291 aa)) are catalytic. Residues cysteine 333, histidine 384, and histidine 509 each coordinate Zn(2+).

Belongs to the class-II aminoacyl-tRNA synthetase family. As to quaternary structure, homodimer. Zn(2+) is required as a cofactor.

The protein localises to the cytoplasm. It catalyses the reaction tRNA(Thr) + L-threonine + ATP = L-threonyl-tRNA(Thr) + AMP + diphosphate + H(+). Catalyzes the attachment of threonine to tRNA(Thr) in a two-step reaction: L-threonine is first activated by ATP to form Thr-AMP and then transferred to the acceptor end of tRNA(Thr). Also edits incorrectly charged L-seryl-tRNA(Thr). In Clostridioides difficile (strain 630) (Peptoclostridium difficile), this protein is Threonine--tRNA ligase.